Consider the following 258-residue polypeptide: Ribosomal RNA small subunit methyltransferase J (258 aa).

Residues R106–D107, E122–R123, and D181 each bind S-adenosyl-L-methionine.

The protein belongs to the methyltransferase superfamily. RsmJ family.

Its subcellular location is the cytoplasm. The catalysed reaction is guanosine(1516) in 16S rRNA + S-adenosyl-L-methionine = N(2)-methylguanosine(1516) in 16S rRNA + S-adenosyl-L-homocysteine + H(+). In terms of biological role, specifically methylates the guanosine in position 1516 of 16S rRNA. This chain is Ribosomal RNA small subunit methyltransferase J, found in Pseudoalteromonas atlantica (strain T6c / ATCC BAA-1087).